The following is a 197-amino-acid chain: Ras-related protein Rab-7B (197 aa).

GTP is bound by residues 14-21 (GEKSVGKT), 33-38 (VTLKPT), 57-61 (DTSGQ), 119-122 (NKID), and 152-153 (AK). The Effector region motif lies at 31-39 (RFVTLKPTI). S-geranylgeranyl cysteine attachment occurs at residues Cys-196 and Cys-197.

Belongs to the small GTPase superfamily. Rab family.

In terms of biological role, protein transport. Probably involved in vesicular traffic. This chain is Ras-related protein Rab-7B (rab7B), found in Dictyostelium discoideum (Social amoeba).